The following is a 303-amino-acid chain: Methionyl-tRNA formyltransferase (303 aa).

108–111 (SDLP) contacts (6S)-5,6,7,8-tetrahydrofolate.

The protein belongs to the Fmt family.

It carries out the reaction L-methionyl-tRNA(fMet) + (6R)-10-formyltetrahydrofolate = N-formyl-L-methionyl-tRNA(fMet) + (6S)-5,6,7,8-tetrahydrofolate + H(+). In terms of biological role, attaches a formyl group to the free amino group of methionyl-tRNA(fMet). The formyl group appears to play a dual role in the initiator identity of N-formylmethionyl-tRNA by promoting its recognition by IF2 and preventing the misappropriation of this tRNA by the elongation apparatus. This Rickettsia typhi (strain ATCC VR-144 / Wilmington) protein is Methionyl-tRNA formyltransferase.